A 429-amino-acid polypeptide reads, in one-letter code: METTQTSTIASKDSRSAWRKTDTMWMLGLYGTAIGAGVLFLPINAGVGGMIPLIIMAILAFPMTFFAHRGLTRFVLSGKNPGEDITEVVEEHFGIGAGKLITLLYFFAIYPILLVYSVAITNTVESFMSHQLGMTPPPRAILSLILIVGMMTIVRFGEQMIVKAMSILVFPFVGVLMLLALYLIPQWNGAALETLSLDTASATGNGLWMTLWLAIPVMVFSFNHSPIISSFAVAKREEYGDMAEQKCSKILAFAHIMMVLTVMFFVFSCVLSLTPADLAAAKEQNISILSYLANHFNAPVIAWMAPIIAIIAITKSFLGHYLGAREGFNGMVIKSLRGKGKSIEINKLNRITALFMLVTTWIVATLNPSILGMIETLGGPIIAMILFLMPMYAIQKVPAMRKYSGHISNVFVVVMGLIAISAIFYSLFS.

Residues 1–22 lie on the Cytoplasmic side of the membrane; sequence METTQTSTIASKDSRSAWRKTD. The chain crosses the membrane as a helical span at residues 23 to 43; that stretch reads TMWMLGLYGTAIGAGVLFLPI. Over 44 to 46 the chain is Periplasmic; that stretch reads NAG. The helical transmembrane segment at 47–67 threads the bilayer; the sequence is VGGMIPLIIMAILAFPMTFFA. Residues 68–99 lie on the Cytoplasmic side of the membrane; that stretch reads HRGLTRFVLSGKNPGEDITEVVEEHFGIGAGK. Residues 100–120 traverse the membrane as a helical segment; that stretch reads LITLLYFFAIYPILLVYSVAI. The Periplasmic portion of the chain corresponds to 121 to 140; that stretch reads TNTVESFMSHQLGMTPPPRA. The chain crosses the membrane as a helical span at residues 141-161; sequence ILSLILIVGMMTIVRFGEQMI. Over 162 to 163 the chain is Cytoplasmic; the sequence is VK. Residues 164–184 traverse the membrane as a helical segment; it reads AMSILVFPFVGVLMLLALYLI. The Periplasmic segment spans residues 185–201; it reads PQWNGAALETLSLDTAS. Residues 202-222 form a helical membrane-spanning segment; sequence ATGNGLWMTLWLAIPVMVFSF. Topologically, residues 223–249 are cytoplasmic; that stretch reads NHSPIISSFAVAKREEYGDMAEQKCSK. Residues 250 to 270 form a helical membrane-spanning segment; the sequence is ILAFAHIMMVLTVMFFVFSCV. The Periplasmic segment spans residues 271 to 297; the sequence is LSLTPADLAAAKEQNISILSYLANHFN. The helical transmembrane segment at 298-318 threads the bilayer; the sequence is APVIAWMAPIIAIIAITKSFL. The Cytoplasmic portion of the chain corresponds to 319 to 347; that stretch reads GHYLGAREGFNGMVIKSLRGKGKSIEINK. The chain crosses the membrane as a helical span at residues 348-368; that stretch reads LNRITALFMLVTTWIVATLNP. Residue Ser369 is a topological domain, periplasmic. Residues 370–390 form a helical membrane-spanning segment; sequence ILGMIETLGGPIIAMILFLMP. At 391–406 the chain is on the cytoplasmic side; the sequence is MYAIQKVPAMRKYSGH. A helical membrane pass occupies residues 407 to 427; that stretch reads ISNVFVVVMGLIAISAIFYSL. The Periplasmic segment spans residues 428 to 429; that stretch reads FS.

Belongs to the amino acid/polyamine transporter 2 family. SdaC/TdcC subfamily.

It localises to the cell inner membrane. It catalyses the reaction L-serine(in) + H(+)(in) = L-serine(out) + H(+)(out). Mediates the import of L-serine into the cell. Is energized by proton cotransport. The sequence is that of Serine transporter SdaC (sdaC) from Escherichia coli O157:H7.